Consider the following 125-residue polypeptide: Large ribosomal subunit protein bL12 (125 aa).

It belongs to the bacterial ribosomal protein bL12 family. As to quaternary structure, homodimer. Part of the ribosomal stalk of the 50S ribosomal subunit. Forms a multimeric L10(L12)X complex, where L10 forms an elongated spine to which 2 to 4 L12 dimers bind in a sequential fashion. Binds GTP-bound translation factors.

Forms part of the ribosomal stalk which helps the ribosome interact with GTP-bound translation factors. Is thus essential for accurate translation. This Campylobacter concisus (strain 13826) protein is Large ribosomal subunit protein bL12.